A 137-amino-acid polypeptide reads, in one-letter code: Small ribosomal subunit protein bS6 (137 aa).

Residues 113–137 (EEQREKKNFRKPFIKREEAATKENK) form a disordered region. Basic and acidic residues predominate over residues 126-137 (IKREEAATKENK).

This sequence belongs to the bacterial ribosomal protein bS6 family.

In terms of biological role, binds together with bS18 to 16S ribosomal RNA. The chain is Small ribosomal subunit protein bS6 from Mycoplasma capricolum subsp. capricolum (strain California kid / ATCC 27343 / NCTC 10154).